The primary structure comprises 121 residues: DNA-directed RNA polymerase subunit omega (121 aa).

The disordered stretch occupies residues 95 to 121 (DGDAANDLQGEEDDLGLGLDEAEDLGF). Acidic residues predominate over residues 103 to 121 (QGEEDDLGLGLDEAEDLGF).

Belongs to the RNA polymerase subunit omega family. In terms of assembly, the RNAP catalytic core consists of 2 alpha, 1 beta, 1 beta' and 1 omega subunit. When a sigma factor is associated with the core the holoenzyme is formed, which can initiate transcription.

It catalyses the reaction RNA(n) + a ribonucleoside 5'-triphosphate = RNA(n+1) + diphosphate. Its function is as follows. Promotes RNA polymerase assembly. Latches the N- and C-terminal regions of the beta' subunit thereby facilitating its interaction with the beta and alpha subunits. In Magnetococcus marinus (strain ATCC BAA-1437 / JCM 17883 / MC-1), this protein is DNA-directed RNA polymerase subunit omega.